The sequence spans 462 residues: Glutamate--tRNA ligase 1 (462 aa).

The 'HIGH' region signature appears at 8-18; it reads PSPTGYLHIGG. The 'KMSKS' region motif lies at 236 to 240; sequence KLSKR. ATP is bound at residue K239.

Belongs to the class-I aminoacyl-tRNA synthetase family. Glutamate--tRNA ligase type 1 subfamily. In terms of assembly, monomer.

Its subcellular location is the cytoplasm. The enzyme catalyses tRNA(Glu) + L-glutamate + ATP = L-glutamyl-tRNA(Glu) + AMP + diphosphate. Functionally, catalyzes the attachment of glutamate to tRNA(Glu) in a two-step reaction: glutamate is first activated by ATP to form Glu-AMP and then transferred to the acceptor end of tRNA(Glu). This Sulfurovum sp. (strain NBC37-1) protein is Glutamate--tRNA ligase 1.